The following is a 165-amino-acid chain: Small ribosomal subunit protein uS5 (165 aa).

The 64-residue stretch at 10–73 folds into the S5 DRBM domain; the sequence is LVEKLVAVDR…EAARRNMITV (64 aa).

It belongs to the universal ribosomal protein uS5 family. Part of the 30S ribosomal subunit. Contacts proteins S4 and S8.

With S4 and S12 plays an important role in translational accuracy. Its function is as follows. Located at the back of the 30S subunit body where it stabilizes the conformation of the head with respect to the body. This Acinetobacter baumannii (strain AB307-0294) protein is Small ribosomal subunit protein uS5.